A 1023-amino-acid chain; its full sequence is Probable histidine kinase 3 (1023 aa).

The Cytoplasmic segment spans residues 1-80 (MDEMSCGGGG…RGWRVVRETW (80 aa)). The chain crosses the membrane as a helical span at residues 81-101 (WWVLLLWILAGSLGSFYLFLF). The Extracellular portion of the chain corresponds to 102-387 (MNAQSLDKRR…CRFEKKPPWP (286 aa)). The CHASE domain maps to 151-352 (TPSAIDQMTF…TNESPISMYG (202 aa)). Residues 388 to 408 (WLAITSSFGTLVIALLTGHIF) traverse the membrane as a helical segment. Topologically, residues 409–1023 (QATVHRIAKV…RFFQNHDQVE (615 aa)) are cytoplasmic. Positions 445–715 (TVSHEIRTPM…TFTFTAVLMR (271 aa)) constitute a Histidine kinase domain. H448 is modified (phosphohistidine; by autocatalysis). 2 consecutive Response regulatory domains span residues 732-854 (NALV…RRAL) and 880-1016 (QIIV…ARFF). D783 is modified (4-aspartylphosphate). The interval 812–831 (LFLLGSSASSPKGGSDTSRE) is disordered. Positions 817–827 (SSASSPKGGSD) are enriched in polar residues. D930 is subject to 4-aspartylphosphate.

Activation probably requires a transfer of a phosphate group between a His in the transmitter domain and an Asp of the receiver domain. In terms of tissue distribution, highly expressed in young leaves and at lower levels in roots, mature leaves, stems and spikelets.

Its subcellular location is the cell membrane. The enzyme catalyses ATP + protein L-histidine = ADP + protein N-phospho-L-histidine.. Its function is as follows. Cytokinin receptor related to bacterial two-component regulators. Functions as a histidine kinase and transmits the stress signal to a downstream MAPK cascade. This Oryza sativa subsp. japonica (Rice) protein is Probable histidine kinase 3.